Consider the following 333-residue polypeptide: Glutamyl endopeptidase (333 aa).

A signal peptide spans 1–29; it reads MKGKFLKVSSLFVATLTTATLVSSPAANA. A propeptide spanning residues 30-68 is cleaved from the precursor; sequence LSSKAMDNHPQQSQSSKQQTPKIQKGGNLKPLEQREHAN. The tract at residues 33 to 61 is disordered; sequence KAMDNHPQQSQSSKQQTPKIQKGGNLKPL. A compositionally biased stretch (low complexity) spans 40–54; the sequence is QQSQSSKQQTPKIQK. Residues His-119, Asp-161, and Ser-237 each act as charge relay system in the active site. The tract at residues 283–333 is disordered; sequence FANDDQPNNPDNPDNPNNPDNPNNPDNPNNPNNPDNPDNGDNNNSDNPDAA. Residues 286–333 show a composition bias toward low complexity; the sequence is DDQPNNPDNPDNPNNPDNPNNPDNPNNPNNPDNPDNGDNNNSDNPDAA. Tandem repeats lie at residues 289–291, 292–294, 295–297, 298–300, 301–303, 304–306, 307–309, 310–312, 313–315, 316–318, and 319–321. Positions 289 to 321 are 11 X 3 AA repeats of P-[DN]-N; it reads PNNPDNPDNPNNPDNPNNPDNPNNPNNPDNPDN.

The protein belongs to the peptidase S1B family. In terms of processing, proteolytically cleaved by aureolysin (aur). This cleavage leads to the activation of SspA.

The protein resides in the secreted. It catalyses the reaction Preferential cleavage: Glu-|-Xaa, Asp-|-Xaa.. In terms of biological role, preferentially cleaves peptide bonds on the carboxyl-terminal side of aspartate and glutamate. Along with other extracellular proteases it is involved in colonization and infection of human tissues. Required for proteolytic maturation of thiol protease SspB and inactivation of SspC, an inhibitor of SspB. It is the most important protease for degradation of fibronectin-binding protein (FnBP) and surface protein A, which are involved in adherence to host cells. May also protect bacteria against host defense mechanism by cleaving the immunoglobulin classes IgG, IgA and IgM. May be involved in the stability of secreted lipases. In Staphylococcus aureus (strain MSSA476), this protein is Glutamyl endopeptidase (sspA).